The primary structure comprises 135 residues: FK506-binding protein 2 (135 aa).

Positions 1–20 (MRVPIITTLLTLALTGLSQA) are cleaved as a signal peptide. The PPIase FKBP-type domain maps to 40–128 (GDTVKMHYRG…IFQTELLEIE (89 aa)). Positions 132–135 (KDEL) match the Prevents secretion from ER motif.

This sequence belongs to the FKBP-type PPIase family. FKBP2 subfamily.

The protein resides in the endoplasmic reticulum. The catalysed reaction is [protein]-peptidylproline (omega=180) = [protein]-peptidylproline (omega=0). With respect to regulation, inhibited by both FK506 and rapamycin. PPIases accelerate the folding of proteins. It catalyzes the cis-trans isomerization of proline imidic peptide bonds in oligopeptides. The sequence is that of FK506-binding protein 2 (fkbB) from Emericella nidulans (strain FGSC A4 / ATCC 38163 / CBS 112.46 / NRRL 194 / M139) (Aspergillus nidulans).